The chain runs to 875 residues: Alanine--tRNA ligase (875 aa).

Zn(2+) is bound by residues His565, His569, Cys666, and His670.

The protein belongs to the class-II aminoacyl-tRNA synthetase family. Zn(2+) serves as cofactor.

The protein localises to the cytoplasm. The catalysed reaction is tRNA(Ala) + L-alanine + ATP = L-alanyl-tRNA(Ala) + AMP + diphosphate. In terms of biological role, catalyzes the attachment of alanine to tRNA(Ala) in a two-step reaction: alanine is first activated by ATP to form Ala-AMP and then transferred to the acceptor end of tRNA(Ala). Also edits incorrectly charged Ser-tRNA(Ala) and Gly-tRNA(Ala) via its editing domain. The chain is Alanine--tRNA ligase from Leptothrix cholodnii (strain ATCC 51168 / LMG 8142 / SP-6) (Leptothrix discophora (strain SP-6)).